The chain runs to 1371 residues: F-actin-uncapping protein LRRC16A (1371 aa).

M1 is modified (N-acetylmethionine). S122 is modified (phosphoserine). 10 LRR repeats span residues 245–269, 275–298, 304–327, 336–363, 391–418, 423–447, 481–506, 543–566, 570–593, and 654–678; these read SNRLEELVLENAGLRTDFAQKLASA, NSGLHTINLAGNPLEDRGVSSLSI, PKGLKHLNLSKTSLSPKGVNSLSQ, ASTLVHLDLSGNVLRGDDLSHMYNFLAQ, LQYLAVLNLSRTVFSHRKGKEVPPSFKQ, SLALMHINLSGTKLSPEPLKALLLG, IHNITSLDISDNGLESDLSTLIVWLS, ESPLQSLSLADSKLKTEVTIIINA, NTSLTKVDISGNGMGDMGAKMLAK, and LQKIENYLLRNHETRKYLQEQAYRL. A coiled-coil region spans residues 710 to 734; sequence GDAIQEDLKSAERLMRDAKNSKTLL. A Phosphothreonine modification is found at T916. Disordered regions lie at residues 957–1000, 1036–1159, and 1172–1371; these read PFPS…QPTQ, KMDS…RRYG, and KAKQ…FIFV. Residues 958–981 form an LRR 11 repeat; it reads FPSLRQEKRSSGFISELPSEEGKK. The tract at residues 958 to 1082 is inhibits capping activity of CAPZA2; that stretch reads FPSLRQEKRS…LIKSRSKSER (125 aa). Phosphoserine is present on S968. Basic and acidic residues-rich tracts occupy residues 977–986 and 1036–1061; these read EEGKKLEHFT and KMDSKKWSTRGSESHELNEGGDEKKK. The interval 1055-1089 is necessary for localization at the cell membrane; sequence GGDEKKKRDSRKSSGFLNLIKSRSKSERPPTILMT. Phosphoserine is present on residues S1067 and S1094. 2 stretches are compositionally biased toward basic and acidic residues: residues 1106–1130 and 1139–1148; these read CPRKDTKAAEHNGNSERIEEIKTPD and EIGKVERSDS. The span at 1190–1199 shows a compositional bias: polar residues; that stretch reads AVSQDSSSPA. Phosphothreonine is present on T1228. Residues 1231-1243 are compositionally biased toward basic and acidic residues; sequence KNTKAEPKAEAGS. Positions 1244 to 1265 are enriched in low complexity; sequence RSRSSSSTPTSPKPLLQSPKPS. Residues S1280, S1288, S1291, S1315, S1324, and S1331 each carry the phosphoserine modification. Positions 1313–1326 are enriched in polar residues; that stretch reads QSSPQPSPRTFSQE. The segment covering 1340 to 1353 has biased composition (basic and acidic residues); the sequence is QEQKQRSSSKDGHQ. Residue S1360 is modified to Phosphoserine.

This sequence belongs to the CARMIL family. In terms of assembly, homodimer. Interacts (via C-terminus) with heterodimer capping protein (CP); this interaction uncaps barbed ends capped by CP, enhances barbed-end actin polymerization and promotes lamellipodial formation and cell migration. Interacts with heterodimer capping protein (CP). Interacts with MYO1E. Interacts with TRIO. As to expression, expressed in lung, placenta, small intestine, liver, thymus, colon, skeletal muscle, heart and brain. Higher expression in kidney.

The protein resides in the cytoplasm. Its subcellular location is the cytoskeleton. The protein localises to the cell membrane. It is found in the cell projection. It localises to the lamellipodium. Its function is as follows. Cell membrane-cytoskeleton-associated protein that plays a role in the regulation of actin polymerization at the barbed end of actin filaments. Prevents F-actin heterodimeric capping protein (CP) activity at the leading edges of migrating cells, and hence generates uncapped barbed ends and enhances actin polymerization, however, seems unable to nucleate filaments. Plays a role in lamellipodial protrusion formations and cell migration. The sequence is that of F-actin-uncapping protein LRRC16A from Homo sapiens (Human).